Here is a 485-residue protein sequence, read N- to C-terminus: tRNA sulfurtransferase (485 aa).

A THUMP domain is found at 63–167; sequence ERYAERLACI…NEHLYLVEKR (105 aa). Residues 185-186, K267, G289, and Q298 each bind ATP; that span reads LI. Residues C346 and C458 are joined by a disulfide bond. Positions 406 to 484 constitute a Rhodanese domain; sequence VSGGEVVVDI…GYHNVKVYRP (79 aa). Residue C458 is the Cysteine persulfide intermediate of the active site.

Belongs to the ThiI family.

It is found in the cytoplasm. The catalysed reaction is [ThiI sulfur-carrier protein]-S-sulfanyl-L-cysteine + a uridine in tRNA + 2 reduced [2Fe-2S]-[ferredoxin] + ATP + H(+) = [ThiI sulfur-carrier protein]-L-cysteine + a 4-thiouridine in tRNA + 2 oxidized [2Fe-2S]-[ferredoxin] + AMP + diphosphate. The enzyme catalyses [ThiS sulfur-carrier protein]-C-terminal Gly-Gly-AMP + S-sulfanyl-L-cysteinyl-[cysteine desulfurase] + AH2 = [ThiS sulfur-carrier protein]-C-terminal-Gly-aminoethanethioate + L-cysteinyl-[cysteine desulfurase] + A + AMP + 2 H(+). The protein operates within cofactor biosynthesis; thiamine diphosphate biosynthesis. Catalyzes the ATP-dependent transfer of a sulfur to tRNA to produce 4-thiouridine in position 8 of tRNAs, which functions as a near-UV photosensor. Also catalyzes the transfer of sulfur to the sulfur carrier protein ThiS, forming ThiS-thiocarboxylate. This is a step in the synthesis of thiazole, in the thiamine biosynthesis pathway. The sulfur is donated as persulfide by IscS. This chain is tRNA sulfurtransferase, found in Shewanella loihica (strain ATCC BAA-1088 / PV-4).